A 322-amino-acid polypeptide reads, in one-letter code: MKFVLAIASLLVLSVVYAYPSEIRTFEEFKKAFNKHYVTPEAEQEARQNFLASLEHIEKAGKGRINQFSDMSLEEFKNQYLMSDQAYEALKKEFDLDAGAQACQIGAVNIPNEIDLRALGYVTKIKNQVACGSCWAFSGVATVESNYLSYDNVSLDLSEQELVDCASQHGCGGDTVLNGLRYIQKNGVVEEQSYPYKAREGRCQRPNAKRYGIKDLCQIYPPNGDKIRTYLATKQAALSVIIGIRDLDSFRHYDGRTILQSDNGGKRNFHAINIVGYGSKQGVRYWIIRNSWDTTWGDKGYGYFVADKNLMGIEKFPLAAML.

Residues 1 to 18 (MKFVLAIASLLVLSVVYA) form the signal peptide. Positions 19 to 99 (YPSEIRTFEE…LKKEFDLDAG (81 aa)) are excised as a propeptide. A disulfide bridge links Cys-131 with Cys-171. Cys-134 is an active-site residue. Asn-152 carries N-linked (GlcNAc...) asparagine glycosylation. Residues His-270 and Asn-290 contribute to the active site.

This sequence belongs to the peptidase C1 family. In terms of tissue distribution, expressed in the gut.

It is found in the secreted. It carries out the reaction Broad endopeptidase specificity.. Probable thiol protease. This chain is Peptidase 1, found in Psoroptes ovis (Sheep scab mite).